Reading from the N-terminus, the 148-residue chain is uncharacterized protein (148 aa).

The N-terminal stretch at 1–35 (MRCVTRTRNWWRRAARMPRAGSSAWWVAVCKQVCT) is a signal peptide.

The protein localises to the secreted. This is an uncharacterized protein from Homo sapiens (Human).